An 86-amino-acid polypeptide reads, in one-letter code: U-myrmeciitoxin(01)-Mg1a (86 aa).

Residues Met1–Ala26 form the signal peptide. A propeptide spanning residues Lys27 to Gly52 is cleaved from the precursor. Leu85 is modified (leucine amide).

It belongs to the formicidae venom precursor-01 superfamily. Expressed by the venom gland. This toxin is detected along the entire venom gland, as well as in the venom reservoir, the venom duct and in the venom. No toxin are detected in the Dufour's gland.

It localises to the secreted. The protein localises to the target cell membrane. Its function is as follows. Toxin that may interact with target cell membranes, producing a concentration-dependent leak in ion conductance, possibly via multimeric pore formation. It produces an immediate sharp increase of calcium concentration in all DRG neurons. This influx in calcium stabilizes without resulting in any observable dye leakage, showing that the effect is not simply cytolytic. This toxin may be one of the major contributors to the pain associated with envenomation. The toxin also displays a weak cytotoxicity (on HEK cells) and some antimicrobial activity (MIC=2.5 uM on C.neoformans (var. grubii), MIC=10.2 uM on S.aureus), but is not hemolytic to human erythtrocytes. In vivo, intraplantar injection into mice causes spontaneous nocifensive behavior (licking, flinching, or shaking of the paw), which lasts 5-7 minutes (10 and 100 uM tested). Mechanical and heat hypoalgesia are observed at 20 and 25 minutes after injection (highest dose tested of 100 uM). In vivo, injection into crickets (A.domesticus) causes an immediate, dose-dependent, reversible and nonlethal incapacitation that lasts about 53 minutes at the highest dose tested (60 ug/g). This chain is U-myrmeciitoxin(01)-Mg1a, found in Myrmecia gulosa (Red bulldog ant).